Consider the following 173-residue polypeptide: uncharacterized protein (173 aa).

The N-acetyltransferase domain occupies 2–171 (VTVREAKLED…PDLSALKTLL (170 aa)).

This sequence belongs to the acetyltransferase family.

This is an uncharacterized protein from Bacillus subtilis (strain 168).